Reading from the N-terminus, the 249-residue chain is Triosephosphate isomerase (249 aa).

Position 9–11 (Asn-9–Lys-11) interacts with substrate. Residue His-95 is the Electrophile of the active site. Catalysis depends on Glu-165, which acts as the Proton acceptor. Substrate-binding positions include Gly-171, Ser-211, and Gly-232 to Gly-233.

The protein belongs to the triosephosphate isomerase family. As to quaternary structure, homodimer.

It is found in the cytoplasm. The enzyme catalyses D-glyceraldehyde 3-phosphate = dihydroxyacetone phosphate. It functions in the pathway carbohydrate biosynthesis; gluconeogenesis. Its pathway is carbohydrate degradation; glycolysis; D-glyceraldehyde 3-phosphate from glycerone phosphate: step 1/1. In terms of biological role, involved in the gluconeogenesis. Catalyzes stereospecifically the conversion of dihydroxyacetone phosphate (DHAP) to D-glyceraldehyde-3-phosphate (G3P). In Chlorobium phaeobacteroides (strain DSM 266 / SMG 266 / 2430), this protein is Triosephosphate isomerase.